Consider the following 262-residue polypeptide: UPF0619 GPI-anchored membrane protein C1322.10 (262 aa).

Positions 1–20 (MLARVGTTLFFLANALAAYA) are cleaved as a signal peptide. Disordered stretches follow at residues 136-165 (STSASSTSSSTATPSSSSTTSSSSSSSSST) and 175-194 (ISSSASSSVSSSSASSSGSI). Residues Asn-207 and Asn-227 are each glycosylated (N-linked (GlcNAc...) asparagine). A lipid anchor (GPI-like-anchor amidated asparagine) is attached at Asn-242. A propeptide spans 243–262 (GVAQLSVAACMGIAALMLIA) (removed in mature form).

The protein belongs to the UPF0619 family.

It localises to the golgi apparatus membrane. The protein localises to the cell membrane. The sequence is that of UPF0619 GPI-anchored membrane protein C1322.10 from Schizosaccharomyces pombe (strain 972 / ATCC 24843) (Fission yeast).